The chain runs to 399 residues: Phosphoglycerate kinase (399 aa).

Residues 24–26, Arg41, 64–67, Arg123, and Arg160 contribute to the substrate site; these read DLN and HLGR. ATP contacts are provided by residues Lys210, Gly298, Glu329, and 355 to 358; that span reads GGDS.

The protein belongs to the phosphoglycerate kinase family. Monomer.

It localises to the cytoplasm. The catalysed reaction is (2R)-3-phosphoglycerate + ATP = (2R)-3-phospho-glyceroyl phosphate + ADP. It functions in the pathway carbohydrate degradation; glycolysis; pyruvate from D-glyceraldehyde 3-phosphate: step 2/5. The polypeptide is Phosphoglycerate kinase (Salinispora tropica (strain ATCC BAA-916 / DSM 44818 / JCM 13857 / NBRC 105044 / CNB-440)).